We begin with the raw amino-acid sequence, 73 residues long: Protein WFDC10B (73 aa).

An N-terminal signal peptide occupies residues 1 to 21; sequence MAPQTLLLVLVLCVLLLQAQG. Residues 28 to 73 form the WAP domain; the sequence is RMQRIKVCEKRPSIDLCIHHCSYFQKCETNKICCSAFCGNICMSIL.

Ubiquitously expressed.

The protein localises to the secreted. This chain is Protein WFDC10B (WFDC10B), found in Homo sapiens (Human).